A 672-amino-acid polypeptide reads, in one-letter code: DNA ligase (672 aa).

Residues Asp-34–Asp-38, Ser-83–Leu-84, and Glu-117 contribute to the NAD(+) site. Lys-119 functions as the N6-AMP-lysine intermediate in the catalytic mechanism. Arg-140, Glu-177, Lys-293, and Lys-317 together coordinate NAD(+). Zn(2+)-binding residues include Cys-411, Cys-414, Cys-429, and Cys-434. In terms of domain architecture, BRCT spans Arg-591–Thr-672.

This sequence belongs to the NAD-dependent DNA ligase family. LigA subfamily. The cofactor is Mg(2+). Requires Mn(2+) as cofactor.

The enzyme catalyses NAD(+) + (deoxyribonucleotide)n-3'-hydroxyl + 5'-phospho-(deoxyribonucleotide)m = (deoxyribonucleotide)n+m + AMP + beta-nicotinamide D-nucleotide.. In terms of biological role, DNA ligase that catalyzes the formation of phosphodiester linkages between 5'-phosphoryl and 3'-hydroxyl groups in double-stranded DNA using NAD as a coenzyme and as the energy source for the reaction. It is essential for DNA replication and repair of damaged DNA. The sequence is that of DNA ligase from Geotalea uraniireducens (strain Rf4) (Geobacter uraniireducens).